The sequence spans 60 residues: Putative per-hexamer repeat protein 1 (60 aa).

This is Putative per-hexamer repeat protein 1 (Phxr1) from Mus musculus (Mouse).